The following is a 673-amino-acid chain: Polyadenylate-binding protein, cytoplasmic and nuclear (673 aa).

The segment at 1-39 is disordered; sequence MSAETATSPAPAAETPVAPAPATQTTPAEGAPTPAAAAP. RRM domains follow at residues 46 to 124, 134 to 211, 227 to 304, and 330 to 407; these read ASLY…WSQR, GNIF…HHVG, TNVY…RAQT, and VNLY…LAQR. The interval 300 to 322 is disordered; sequence GRAQTKSEREAELKKSHEEKRLE. Over residues 304 to 322 the composition is skewed to basic and acidic residues; it reads TKSEREAELKKSHEEKRLE. Disordered regions lie at residues 509 to 572 and 644 to 673; these read APGY…AGRL and WGKD…EKKE. A PABC domain is found at 569–646; sequence AGRLDAQSLA…ALRVLAEWGK (78 aa).

The protein belongs to the polyadenylate-binding protein type-1 family.

The protein resides in the cytoplasm. It localises to the nucleus. Its function is as follows. Binds the poly(A) tail of mRNA. Appears to be an important mediator of the multiple roles of the poly(A) tail in mRNA biogenesis, stability and translation. In the nucleus, involved in both mRNA cleavage and polyadenylation. Is also required for efficient mRNA export to the cytoplasm. Acts in concert with a poly(A)-specific nuclease (PAN) to affect poly(A) tail shortening, which may occur concomitantly with either nucleocytoplasmic mRNA transport or translational initiation. In the cytoplasm, stimulates translation initiation and regulates mRNA decay through translation termination-coupled poly(A) shortening, probably mediated by PAN. The polypeptide is Polyadenylate-binding protein, cytoplasmic and nuclear (PAB1) (Cryptococcus neoformans var. neoformans serotype D (strain B-3501A) (Filobasidiella neoformans)).